A 913-amino-acid polypeptide reads, in one-letter code: Vacuolar membrane protease (913 aa).

Residues 1–15 (MMANYFRSTFKFRKT) lie on the Cytoplasmic side of the membrane. A helical transmembrane segment spans residues 16 to 36 (TVSTLFVLTVLVISILTWFDA). The Vacuolar segment spans residues 37–364 (NKYKSNLPDD…FFVVSARQLY (328 aa)). N-linked (GlcNAc...) asparagine glycosylation is present at asparagine 117. Residues histidine 152 and aspartate 164 each coordinate Zn(2+). Glutamate 196 functions as the Proton acceptor in the catalytic mechanism. Residues glutamate 197, glutamate 222, and histidine 296 each contribute to the Zn(2+) site. Residues 365–385 (VWNIVLLCVLPITLILLRIVC) traverse the membrane as a helical segment. At 386–394 (NKLGTWRMP) the chain is on the cytoplasmic side. The helical transmembrane segment at 395–415 (TSALFTRIPFALFVSSFTIYF) threads the bilayer. Residues 416 to 431 (TKELLLQLNPTIWSRN) lie on the Vacuolar side of the membrane. Residues 432–452 (FILPFLFCISEFLLINTLVLA) traverse the membrane as a helical segment. At 453 to 465 (LFEYLWPIQDFKT) the chain is on the cytoplasmic side. Residues 466-486 (LSLLELSAIAWLFLLKCTWDL) traverse the membrane as a helical segment. The Vacuolar portion of the chain corresponds to 487 to 494 (SSSGFKAT). Residues 495–515 (GVYPVTVFYLFISLASMFGLC) traverse the membrane as a helical segment. Residues 516–600 (SMCFGKRPNA…TLNYDWSAQY (85 aa)) are Cytoplasmic-facing. The span at 540-552 (NDTHSIECPRQPE) shows a compositional bias: basic and acidic residues. Positions 540-578 (NDTHSIECPRQPEDSETTETSPLINTPSSSVQSSPIASS) are disordered. Residues 557–566 (TETSPLINTP) are compositionally biased toward polar residues. A compositionally biased stretch (low complexity) spans 567 to 578 (SSSVQSSPIASS). A helical membrane pass occupies residues 601 to 621 (LLAVPINAFLIWESLFNLFDA). The Vacuolar portion of the chain corresponds to 622-634 (LSMTVQESNKATE). The chain crosses the membrane as a helical span at residues 635-655 (AVFKFAIYGAIFLCSPLLPFT). At 656 to 660 (TKLNR) the chain is on the cytoplasmic side. The helical transmembrane segment at 661 to 681 (FVVIILGVVTILAASFSLFAA) threads the bilayer. Over 682-913 (PYTELAPLKL…MVTIHKYLEL (232 aa)) the chain is Vacuolar. Residues asparagine 729, asparagine 794, and asparagine 810 are each glycosylated (N-linked (GlcNAc...) asparagine).

The protein belongs to the peptidase M28 family. The cofactor is Zn(2+).

It localises to the vacuole membrane. May be involved in vacuolar sorting and osmoregulation. This chain is Vacuolar membrane protease, found in Kluyveromyces lactis (strain ATCC 8585 / CBS 2359 / DSM 70799 / NBRC 1267 / NRRL Y-1140 / WM37) (Yeast).